We begin with the raw amino-acid sequence, 495 residues long: Glutamyl-tRNA(Gln) amidotransferase subunit A (495 aa).

Catalysis depends on charge relay system residues Lys-78 and Ser-158. Catalysis depends on Ser-182, which acts as the Acyl-ester intermediate.

It belongs to the amidase family. GatA subfamily. In terms of assembly, heterotrimer of A, B and C subunits.

The catalysed reaction is L-glutamyl-tRNA(Gln) + L-glutamine + ATP + H2O = L-glutaminyl-tRNA(Gln) + L-glutamate + ADP + phosphate + H(+). Its function is as follows. Allows the formation of correctly charged Gln-tRNA(Gln) through the transamidation of misacylated Glu-tRNA(Gln) in organisms which lack glutaminyl-tRNA synthetase. The reaction takes place in the presence of glutamine and ATP through an activated gamma-phospho-Glu-tRNA(Gln). This Roseobacter denitrificans (strain ATCC 33942 / OCh 114) (Erythrobacter sp. (strain OCh 114)) protein is Glutamyl-tRNA(Gln) amidotransferase subunit A.